A 443-amino-acid polypeptide reads, in one-letter code: uncharacterized protein (443 aa).

The next 4 membrane-spanning stretches (helical) occupy residues 15-35 (IYAG…DGLA), 38-58 (LGMA…GPGS), 59-79 (AWQG…LSWL), and 181-201 (VVTA…IPAL). Residues 231 to 270 (NFGIGNIGNANLGNGNIGNANLGSGNAGFFNFGNGNDGNT) are 4 X 10 AA approximate repeats.

It belongs to the mycobacterial PPE family.

It localises to the cell membrane. This is an uncharacterized protein from Mycobacterium tuberculosis (strain ATCC 25618 / H37Rv).